The chain runs to 471 residues: Glutamate--tRNA ligase (471 aa).

The short motif at 9 to 19 is the 'HIGH' region element; it reads PSPTGYLHVGG. Zn(2+) contacts are provided by Cys98, Cys100, Cys125, and His127. A 'KMSKS' region motif is present at residues 237 to 241; the sequence is KLSKR. Lys240 provides a ligand contact to ATP.

This sequence belongs to the class-I aminoacyl-tRNA synthetase family. Glutamate--tRNA ligase type 1 subfamily. In terms of assembly, monomer. It depends on Zn(2+) as a cofactor.

The protein resides in the cytoplasm. The catalysed reaction is tRNA(Glu) + L-glutamate + ATP = L-glutamyl-tRNA(Glu) + AMP + diphosphate. Its function is as follows. Catalyzes the attachment of glutamate to tRNA(Glu) in a two-step reaction: glutamate is first activated by ATP to form Glu-AMP and then transferred to the acceptor end of tRNA(Glu). This Salmonella schwarzengrund (strain CVM19633) protein is Glutamate--tRNA ligase.